The sequence spans 2392 residues: Protein Ycf2 (2392 aa).

1658–1665 contributes to the ATP binding site; it reads GPTEIGKS.

It belongs to the Ycf2 family.

Its subcellular location is the plastid. It is found in the chloroplast stroma. Functionally, probable ATPase of unknown function. Its presence in a non-photosynthetic plant (Epifagus virginiana) and experiments in tobacco indicate that it has an essential function which is probably not related to photosynthesis. This chain is Protein Ycf2, found in Anthoceros angustus (Hornwort).